The chain runs to 336 residues: N-acetylornithine carbamoyltransferase (336 aa).

Residues 49 to 52 (SMRT), Trp77, and Arg112 each bind carbamoyl phosphate. Residue Glu144 participates in N(2)-acetyl-L-ornithine binding. Residue 148–151 (HPCQ) participates in carbamoyl phosphate binding. 2 residues coordinate N(2)-acetyl-L-ornithine: Lys252 and Leu295. Residue 294–295 (CL) participates in carbamoyl phosphate binding. At Lys302 the chain carries N6-carboxylysine. Residue Arg322 coordinates carbamoyl phosphate.

This sequence belongs to the aspartate/ornithine carbamoyltransferase superfamily. AOTCase family. As to quaternary structure, homotrimer.

Its subcellular location is the cytoplasm. The catalysed reaction is N(2)-acetyl-L-ornithine + carbamoyl phosphate = N(2)-acetyl-L-citrulline + phosphate + H(+). It functions in the pathway amino-acid biosynthesis; L-arginine biosynthesis. Its activity is regulated as follows. Carboxylation at Lys-302 increases the catalytic activity of the enzyme. Functionally, catalyzes the transfer of the carbamoyl group from carbamoyl phosphate to the delta-amino group of N(2)-acetyl-L-ornithine to produce N(2)-acetyl-L-citrulline. This is a step in an alternative arginine biosynthesis pathway. The enzyme has no activity with ornithine. This Xylella fastidiosa (strain 9a5c) protein is N-acetylornithine carbamoyltransferase.